A 114-amino-acid chain; its full sequence is T-cell leukemia/lymphoma protein 1A (114 aa).

The protein belongs to the TCL1 family. In terms of assembly, homodimer. Interacts with AKT1, AKT2 and AKT3 (via PH domain). Interacts with PNPT1; the interaction has no effect on PNPT1 exonuclease activity. In terms of tissue distribution, restricted in the T-cell lineage to immature thymocytes and activated peripheral lymphocytes. Preferentially expressed early in T- and B-lymphocyte differentiation.

Its subcellular location is the cytoplasm. It is found in the nucleus. The protein resides in the microsome. It localises to the endoplasmic reticulum. Functionally, enhances the phosphorylation and activation of AKT1, AKT2 and AKT3. Promotes nuclear translocation of AKT1. Enhances cell proliferation, stabilizes mitochondrial membrane potential and promotes cell survival. In Homo sapiens (Human), this protein is T-cell leukemia/lymphoma protein 1A (TCL1A).